The primary structure comprises 370 residues: Cobalt-precorrin-5B C(1)-methyltransferase (370 aa).

The protein belongs to the CbiD family.

The catalysed reaction is Co-precorrin-5B + S-adenosyl-L-methionine = Co-precorrin-6A + S-adenosyl-L-homocysteine. Its pathway is cofactor biosynthesis; adenosylcobalamin biosynthesis; cob(II)yrinate a,c-diamide from sirohydrochlorin (anaerobic route): step 6/10. In terms of biological role, catalyzes the methylation of C-1 in cobalt-precorrin-5B to form cobalt-precorrin-6A. The chain is Cobalt-precorrin-5B C(1)-methyltransferase from Prochlorococcus marinus (strain MIT 9215).